We begin with the raw amino-acid sequence, 256 residues long: Probable hydroxyacylglutathione hydrolase SPCC13B11.03c (256 aa).

Zn(2+) is bound by residues histidine 63, histidine 65, aspartate 67, histidine 68, histidine 118, and aspartate 139. Substrate-binding positions include 148–150, 178–180, and 250–253; these read RFF, HEY, and RTLK. Histidine 178 lines the Zn(2+) pocket.

It belongs to the metallo-beta-lactamase superfamily. Glyoxalase II family. Requires Zn(2+) as cofactor.

The protein resides in the cytoplasm. It localises to the nucleus. It catalyses the reaction an S-(2-hydroxyacyl)glutathione + H2O = a 2-hydroxy carboxylate + glutathione + H(+). The catalysed reaction is (R)-S-lactoylglutathione + H2O = (R)-lactate + glutathione + H(+). Its pathway is secondary metabolite metabolism; methylglyoxal degradation; (R)-lactate from methylglyoxal: step 2/2. Its function is as follows. Thiolesterase that catalyzes the hydrolysis of S-D-lactoylglutathione to form glutathione and D-lactic acid. Involved in the metabolism of methylglyoxal, a toxic compound for yeast proliferation, by converting methylglyoxal to lactate via S-D-lactoylglutathione by sequential enzyme reactions catalyzed by glyoxalase I and glyoxalase II. This chain is Probable hydroxyacylglutathione hydrolase SPCC13B11.03c, found in Schizosaccharomyces pombe (strain 972 / ATCC 24843) (Fission yeast).